Here is a 291-residue protein sequence, read N- to C-terminus: Tryptophan synthase alpha chain (291 aa).

Active-site proton acceptor residues include E69 and D80.

This sequence belongs to the TrpA family. In terms of assembly, tetramer of two alpha and two beta chains.

The enzyme catalyses (1S,2R)-1-C-(indol-3-yl)glycerol 3-phosphate + L-serine = D-glyceraldehyde 3-phosphate + L-tryptophan + H2O. The protein operates within amino-acid biosynthesis; L-tryptophan biosynthesis; L-tryptophan from chorismate: step 5/5. Functionally, the alpha subunit is responsible for the aldol cleavage of indoleglycerol phosphate to indole and glyceraldehyde 3-phosphate. This Bifidobacterium longum (strain NCC 2705) protein is Tryptophan synthase alpha chain.